The primary structure comprises 605 residues: Ankyrin repeat domain-containing protein 13D (605 aa).

2 UIM domains span residues 482–501 and 528–547; these read EDDD…AGTE and EEQL…STES. Residues 538 to 554 show a composition bias toward low complexity; the sequence is QESLQLSTESRGPESPQ. Residues 538-605 are disordered; it reads QESLQLSTES…RILQLSLTEH (68 aa). A Phosphoserine modification is found at Ser-552. Thr-556 bears the Phosphothreonine mark. Residues 564–575 are compositionally biased toward low complexity; that stretch reads SFEEQLRLALEL. 2 UIM domains span residues 564–583 and 589–605; these read SFEE…QEEL and QEED…LTEH. Over residues 576 to 589 the composition is skewed to basic and acidic residues; the sequence is SSREQEELERRGQQ.

In terms of assembly, interacts with EGFR (ubiquitinated); the interaction is direct and may regulate EGFR internalization.

It is found in the cell membrane. The protein localises to the late endosome. Ubiquitin-binding protein that specifically recognizes and binds 'Lys-63'-linked ubiquitin. Does not bind 'Lys-48'-linked ubiquitin. Positively regulates the internalization of ligand-activated EGFR by binding to the Ub moiety of ubiquitinated EGFR at the cell membrane. The protein is Ankyrin repeat domain-containing protein 13D (Ankrd13d) of Mus musculus (Mouse).